Reading from the N-terminus, the 70-residue chain is Translational regulator CsrA (70 aa).

It belongs to the CsrA/RsmA family. Homodimer; the beta-strands of each monomer intercalate to form a hydrophobic core, while the alpha-helices form wings that extend away from the core.

It is found in the cytoplasm. In terms of biological role, a key translational regulator that binds mRNA to regulate translation initiation and/or mRNA stability. Mediates global changes in gene expression, shifting from rapid growth to stress survival by linking envelope stress, the stringent response and the catabolite repression systems. Usually binds in the 5'-UTR; binding at or near the Shine-Dalgarno sequence prevents ribosome-binding, repressing translation, binding elsewhere in the 5'-UTR can activate translation and/or stabilize the mRNA. Its function is antagonized by small RNA(s). In Hydrogenovibrio crunogenus (strain DSM 25203 / XCL-2) (Thiomicrospira crunogena), this protein is Translational regulator CsrA.